We begin with the raw amino-acid sequence, 372 residues long: tRNA-specific 2-thiouridylase MnmA (372 aa).

ATP contacts are provided by residues 17–24 (GMSGGVDS) and M43. Residues 103–105 (NPD) are interaction with target base in tRNA. Catalysis depends on C108, which acts as the Nucleophile. A disulfide bridge links C108 with C205. ATP is bound at residue G133. Positions 155–157 (KDQ) are interaction with tRNA. C205 serves as the catalytic Cysteine persulfide intermediate. The tract at residues 317-318 (RY) is interaction with tRNA.

This sequence belongs to the MnmA/TRMU family.

The protein localises to the cytoplasm. It carries out the reaction S-sulfanyl-L-cysteinyl-[protein] + uridine(34) in tRNA + AH2 + ATP = 2-thiouridine(34) in tRNA + L-cysteinyl-[protein] + A + AMP + diphosphate + H(+). Catalyzes the 2-thiolation of uridine at the wobble position (U34) of tRNA, leading to the formation of s(2)U34. The chain is tRNA-specific 2-thiouridylase MnmA from Shewanella sediminis (strain HAW-EB3).